The primary structure comprises 384 residues: 8-amino-7-oxononanoate synthase (384 aa).

Position 21 (R21) interacts with substrate. 108-109 (GF) serves as a coordination point for pyridoxal 5'-phosphate. H133 lines the substrate pocket. 3 residues coordinate pyridoxal 5'-phosphate: S179, H207, and T233. N6-(pyridoxal phosphate)lysine is present on K236. Residue T352 participates in substrate binding.

The protein belongs to the class-II pyridoxal-phosphate-dependent aminotransferase family. BioF subfamily. Homodimer. Pyridoxal 5'-phosphate serves as cofactor.

The enzyme catalyses 6-carboxyhexanoyl-[ACP] + L-alanine + H(+) = (8S)-8-amino-7-oxononanoate + holo-[ACP] + CO2. The protein operates within cofactor biosynthesis; biotin biosynthesis. Functionally, catalyzes the decarboxylative condensation of pimeloyl-[acyl-carrier protein] and L-alanine to produce 8-amino-7-oxononanoate (AON), [acyl-carrier protein], and carbon dioxide. The protein is 8-amino-7-oxononanoate synthase of Escherichia coli O8 (strain IAI1).